The chain runs to 455 residues: Bifunctional protein GlmU (455 aa).

A pyrophosphorylase region spans residues 1–226; it reads MSLDIVILAA…AMEVQGANDR (226 aa). Residues 8-11, Lys22, Gln73, 78-79, 99-101, Gly136, Glu151, Asn166, and Asn224 each bind UDP-N-acetyl-alpha-D-glucosamine; these read LAAG, GT, and YGD. A Mg(2+)-binding site is contributed by Asp101. Residue Asn224 coordinates Mg(2+). Positions 227–247 are linker; sequence RQLSELERHYQLREGRRLMAQ. Residues 248–455 form an N-acetyltransferase region; that stretch reads GVTLRDPARF…WKRPEKIKKS (208 aa). 2 residues coordinate UDP-N-acetyl-alpha-D-glucosamine: Arg330 and Lys348. Residue His360 is the Proton acceptor of the active site. 2 residues coordinate UDP-N-acetyl-alpha-D-glucosamine: Tyr363 and Asn374. Acetyl-CoA is bound by residues Ala377, 383–384, Ser402, Ala420, and Arg437; that span reads NY.

In the N-terminal section; belongs to the N-acetylglucosamine-1-phosphate uridyltransferase family. This sequence in the C-terminal section; belongs to the transferase hexapeptide repeat family. As to quaternary structure, homotrimer. Mg(2+) is required as a cofactor.

It is found in the cytoplasm. It carries out the reaction alpha-D-glucosamine 1-phosphate + acetyl-CoA = N-acetyl-alpha-D-glucosamine 1-phosphate + CoA + H(+). It catalyses the reaction N-acetyl-alpha-D-glucosamine 1-phosphate + UTP + H(+) = UDP-N-acetyl-alpha-D-glucosamine + diphosphate. The protein operates within nucleotide-sugar biosynthesis; UDP-N-acetyl-alpha-D-glucosamine biosynthesis; N-acetyl-alpha-D-glucosamine 1-phosphate from alpha-D-glucosamine 6-phosphate (route II): step 2/2. It participates in nucleotide-sugar biosynthesis; UDP-N-acetyl-alpha-D-glucosamine biosynthesis; UDP-N-acetyl-alpha-D-glucosamine from N-acetyl-alpha-D-glucosamine 1-phosphate: step 1/1. It functions in the pathway bacterial outer membrane biogenesis; LPS lipid A biosynthesis. Functionally, catalyzes the last two sequential reactions in the de novo biosynthetic pathway for UDP-N-acetylglucosamine (UDP-GlcNAc). The C-terminal domain catalyzes the transfer of acetyl group from acetyl coenzyme A to glucosamine-1-phosphate (GlcN-1-P) to produce N-acetylglucosamine-1-phosphate (GlcNAc-1-P), which is converted into UDP-GlcNAc by the transfer of uridine 5-monophosphate (from uridine 5-triphosphate), a reaction catalyzed by the N-terminal domain. This Pseudomonas putida (strain ATCC 47054 / DSM 6125 / CFBP 8728 / NCIMB 11950 / KT2440) protein is Bifunctional protein GlmU.